A 516-amino-acid polypeptide reads, in one-letter code: Putative protein NRT1/ PTR FAMILY 2.2 (516 aa).

11 helical membrane passes run 31–51, 67–87, 90–110, 138–158, 174–194, 201–221, 320–340, 362–382, 394–414, 437–457, and 476–496; these read TLLG…VFLI, IVNG…DSFF, IPVI…LTMI, ILYI…FTLA, FFNW…TAIV, SWKL…IVFV, LLLA…LIIL, VIVI…VYPM, LQKV…SAIV, FIAS…ITLI, and VYWL…AWFY.

This sequence belongs to the major facilitator superfamily. Proton-dependent oligopeptide transporter (POT/PTR) (TC 2.A.17) family. In terms of tissue distribution, not detected.

It localises to the membrane. In terms of biological role, transporter involved in a passive nitrate efflux. This chain is Putative protein NRT1/ PTR FAMILY 2.2 (NPF2.2), found in Arabidopsis thaliana (Mouse-ear cress).